The following is a 65-amino-acid chain: Keratin-associated protein 20-2 (65 aa).

The protein belongs to the KRTAP type 20 family. As to quaternary structure, interacts with hair keratins.

Functionally, in the hair cortex, hair keratin intermediate filaments are embedded in an interfilamentous matrix, consisting of hair keratin-associated proteins (KRTAP), which are essential for the formation of a rigid and resistant hair shaft through their extensive disulfide bond cross-linking with abundant cysteine residues of hair keratins. The matrix proteins include the high-sulfur and high-glycine-tyrosine keratins. The sequence is that of Keratin-associated protein 20-2 (KRTAP20-2) from Homo sapiens (Human).